An 89-amino-acid chain; its full sequence is Small ribosomal subunit protein bS20 (89 aa).

Residues 1–11 (MANHKSAEKRN) show a composition bias toward basic and acidic residues. Residues 1-30 (MANHKSAEKRNRQNQVARLRNKSTRTAMKN) form a disordered region.

This sequence belongs to the bacterial ribosomal protein bS20 family.

Its function is as follows. Binds directly to 16S ribosomal RNA. This chain is Small ribosomal subunit protein bS20, found in Desulfotalea psychrophila (strain LSv54 / DSM 12343).